The sequence spans 413 residues: Alpha-1-antitrypsin-like protein CM55-MS (413 aa).

Residues 1–24 (MPSSISWGLLLLAALSCLGPGSLA) form the signal peptide. Gln-25 is subject to Pyrrolidone carboxylic acid. Residues Asn-65, Asn-102, Asn-165, and Asn-266 are each glycosylated (N-linked (GlcNAc...) asparagine). Residues 368–387 (GATVGGITFMSRPKEVIFDR) form an RCL region.

It belongs to the serpin family. As to expression, expressed in liver.

It localises to the secreted. Its function is as follows. Serine protease inhibitor. This Tamias sibiricus (Siberian chipmunk) protein is Alpha-1-antitrypsin-like protein CM55-MS.